The following is a 323-amino-acid chain: tRNA U34 carboxymethyltransferase (323 aa).

Residues lysine 91, tryptophan 105, lysine 110, glycine 130, aspartate 152–threonine 154, isoleucine 181–glutamate 182, methionine 196, tyrosine 200, and arginine 315 contribute to the carboxy-S-adenosyl-L-methionine site.

Belongs to the class I-like SAM-binding methyltransferase superfamily. CmoB family. In terms of assembly, homotetramer.

The enzyme catalyses carboxy-S-adenosyl-L-methionine + 5-hydroxyuridine(34) in tRNA = 5-carboxymethoxyuridine(34) in tRNA + S-adenosyl-L-homocysteine + H(+). Its function is as follows. Catalyzes carboxymethyl transfer from carboxy-S-adenosyl-L-methionine (Cx-SAM) to 5-hydroxyuridine (ho5U) to form 5-carboxymethoxyuridine (cmo5U) at position 34 in tRNAs. The chain is tRNA U34 carboxymethyltransferase from Shigella dysenteriae serotype 1 (strain Sd197).